Reading from the N-terminus, the 189-residue chain is uncharacterized protein (189 aa).

Residues 1 to 23 (MIKTTPHKIVILMGILLSPSVFA) form the signal peptide. Residues 104 to 125 (SSPKLIIPQSGDSSSTTSNIGM) are disordered. Residues 113–123 (SGDSSSTTSNI) are compositionally biased toward polar residues.

This sequence belongs to the fimbrial protein family.

The protein resides in the fimbrium. Its function is as follows. Part of the yadCKLM-htrE-yadVN fimbrial operon. Could contribute to adhesion to various surfaces in specific environmental niches. This is an uncharacterized protein from Escherichia coli (strain K12).